Here is a 112-residue protein sequence, read N- to C-terminus: SPbeta prophage-derived uncharacterized protein YoqB (112 aa).

This is SPbeta prophage-derived uncharacterized protein YoqB (yoqB) from Bacillus subtilis (strain 168).